A 947-amino-acid chain; its full sequence is Serine-aspartate repeat-containing protein C (947 aa).

The signal sequence occupies residues 1–50 (MNNKKTATNRKGMIPNRLNKFSIRKYSVGTASILVGTTLIFGLSGHEAKA). A disordered region spans residues 51-164 (AEHTNGELNQ…STTPKTTTIK (114 aa)). The interval 51-495 (AEHTNGELNQ…GSSTANGDQK (445 aa)) is ligand binding A region. The span at 56–71 (GELNQSKNETTAPSEN) shows a compositional bias: polar residues. Residues 72–83 (KTTKKVDSRQLK) are compositionally biased toward basic and acidic residues. The segment covering 84 to 155 (DNTQTATADQ…SNLTQAKDVS (72 aa)) has biased composition (polar residues). CNA-B domains follow at residues 496 to 606 (KYNL…YKTP) and 607 to 717 (KYSL…EEET). The disordered stretch occupies residues 678 to 927 (TQTGTNTTED…NNSNNGTLFG (250 aa)). 2 stretches are compositionally biased toward acidic residues: residues 685 to 695 (TEDDKDADGGE) and 712 to 886 (YYEE…DSDS). Positions 910-914 (LPETG) match the LPXTG sorting signal motif. Positions 912-927 (ETGSENNNSNNGTLFG) are enriched in low complexity. The residue at position 913 (Thr-913) is a Pentaglycyl murein peptidoglycan amidated threonine. The propeptide at 914-947 (GSENNNSNNGTLFGGLFAALGSLLLFGRRKKQNK) is removed by sortase.

This sequence belongs to the serine-aspartate repeat-containing protein (SDr) family. As to quaternary structure, homodimerizes; via N2-Domain. Interacts with host NRXN1; this interaction mediates bacterial attachment to host cells.

Its subcellular location is the secreted. The protein resides in the cell wall. Cell surface-associated calcium-binding protein which plays an important role in adhesion and pathogenesis. Mediates interactions with components of the extracellular matrix such as host NRXN1 to promote bacterial adhesion. This chain is Serine-aspartate repeat-containing protein C (sdrC), found in Staphylococcus aureus (strain USA300).